The sequence spans 575 residues: MKRSLQALYCQLLSFLLILALTEALAFAIQEPSPRESLQVLPSGTPPGTMVTAPHSSTRHTSVVMLTPNPDGPPSQAAAPMATPTPRAEGHPPTHTISTIAATVTAPHSESSLSTGPAPAAMATTSSKPEGRPRGQAAPTILLTKPPGATSRPTTAPPRTTTRRPPRPPGSSRKGAGNSSRPVPPAPGGHSRSKEGQRGRNPSSTPLGQKRPLGKIFQIYKGNFTGSVEPEPSTLTPRTPLWGYSSSPQPQTVAATTVPSNTSWAPTTTSLGPAKDKPGLRRAAQGGGSTFTSQGGTPDATAASGAPVSPQAAPVPSQRPHHGDPQDGPSHSDSWLTVTPGTSRPLSTSSGVFTAATGPTPAAFDTSVSAPSQGIPQGASTTPQAPTHPSRVSESTISGAKEETVATLTMTDRVPSPLSTVVSTATGNFLNRLVPAGTWKPGTAGNISHVAEGDKPQHRATICLSKMDIAWVILAISVPISSCSVLLTVCCMKRKKKTANPENNLSYWNNTITMDYFNRHAVELPREIQSLETSEDQLSEPRSPANGDYRDTGMVLVNPFCQETLFVGNDQVSEI.

Residues 9-29 (YCQLLSFLLILALTEALAFAI) form a helical membrane-spanning segment. The interaction with SH3GL2 stretch occupies residues 31–169 (EPSPRESLQV…TTTRRPPRPP (139 aa)). A disordered region spans residues 65–398 (MLTPNPDGPP…PSRVSESTIS (334 aa)). The segment covering 74–87 (PSQAAAPMATPTPR) has biased composition (low complexity). A compositionally biased stretch (polar residues) spans 95–115 (HTISTIAATVTAPHSESSLST). The segment covering 146–160 (PPGATSRPTTAPPRT) has biased composition (low complexity). Positions 173 to 407 (RKGAGNSSRP…SGAKEETVAT (235 aa)) are interaction with DST (isoform 1). The segment covering 244 to 271 (YSSSPQPQTVAATTVPSNTSWAPTTTSL) has biased composition (polar residues). Over residues 290–318 (TFTSQGGTPDATAASGAPVSPQAAPVPSQ) the composition is skewed to low complexity. The span at 329–352 (PSHSDSWLTVTPGTSRPLSTSSGV) shows a compositional bias: polar residues. The segment covering 353–366 (FTAATGPTPAAFDT) has biased composition (low complexity). Residues 367–398 (SVSAPSQGIPQGASTTPQAPTHPSRVSESTIS) show a composition bias toward polar residues. Residues 469–489 (IAWVILAISVPISSCSVLLTV) form a helical membrane-spanning segment. An interaction with CYFIP2 region spans residues 490 to 575 (CCMKRKKKTA…FVGNDQVSEI (86 aa)).

Interacts with DST (isoform 1). Interacts with SH3GL2. Interacts (via N-terminus) with CYFIP1 and CYFIP2; the interactions associate TMEM108 with the WAVE1 complex. In terms of processing, glycosylated.

It localises to the membrane. The protein localises to the postsynaptic density. Its subcellular location is the endosome membrane. It is found in the cell projection. The protein resides in the axon. It localises to the dendrite. The protein localises to the early endosome. Transmembrane protein required for proper cognitive functions. Involved in the development of dentate gyrus (DG) neuron circuitry, is necessary for AMPA receptors surface expression and proper excitatory postsynaptic currents of DG granule neurons. Regulates the organization and stability of the microtubule network of sensory neurons to allow axonal transport. Through the interaction with DST, mediates the docking of the dynein/dynactin motor complex to vesicle cargos for retrograde axonal transport. In hippocampal neurons, required for BDNF-dependent dendrite outgrowth. Cooperates with SH3GL2 and recruits the WAVE1 complex to facilitate actin-dependent BDNF:NTRK2 early endocytic trafficking and mediate signaling from early endosomes. This Homo sapiens (Human) protein is Transmembrane protein 108.